The following is a 245-amino-acid chain: uncharacterized protein (245 aa).

The stretch at 33–176 (QRAAYQQVQA…SSQRDMLTAT (144 aa)) forms a coiled coil.

This is an uncharacterized protein from Mycobacterium tuberculosis (strain CDC 1551 / Oshkosh).